Consider the following 604-residue polypeptide: ATP-dependent RNA helicase DED1 (604 aa).

Residues 1-19 (MAELSEQVQNLSINDNNEN) are compositionally biased toward polar residues. Residues 1–55 (MAELSEQVQNLSINDNNENGYVPPHLRGKPRSARNNSSNYNNNNGGYNGGRGGGS) are disordered. Alanine 2 carries the N-acetylalanine modification. The segment covering 34–45 (RNNSSNYNNNNG) has biased composition (low complexity). Positions 46–55 (GYNGGRGGGS) are enriched in gly residues. Arginine 51 carries the omega-N-methylarginine modification. A Dimethylated arginine; alternate modification is found at arginine 62. The residue at position 62 (arginine 62) is an Omega-N-methylarginine; alternate. A compositionally biased stretch (gly residues) spans 67–76 (NGGFFGGNNG). The disordered stretch occupies residues 67-94 (NGGFFGGNNGGSRSNGRSGGRWIDGKHV). The Q motif motif lies at 142-170 (TEFTSPPLDGLLLENIKLARFTKPTPVQK). Lysine 158 is covalently cross-linked (Glycyl lysine isopeptide (Lys-Gly) (interchain with G-Cter in ubiquitin)). A Helicase ATP-binding domain is found at 173–362 (VPIVANGRDL…RDFLSDYIFL (190 aa)). 186–193 (AQTGSGKT) is a binding site for ATP. A phosphoserine mark is found at serine 215, serine 218, and serine 263. Positions 306-309 (DEAD) match the DEAD box motif. The region spanning 373–533 (NITQKVLYVE…EVPSFLKDAM (161 aa)) is the Helicase C-terminal domain. The interval 533 to 604 (MMSAPGSRSN…SGGSNNSSWW (72 aa)) is disordered. Phosphoserine occurs at positions 535, 539, and 543. Arginine 545 is subject to Dimethylated arginine; alternate. An Omega-N-methylarginine; alternate modification is found at arginine 545. A phosphoserine mark is found at serine 572 and serine 576. An Omega-N-methylarginine modification is found at arginine 578. Residues 584–604 (GSDSKSSGWGNSGGSNNSSWW) show a composition bias toward low complexity. Phosphoserine is present on serine 598.

Belongs to the DEAD box helicase family. DDX3/DED1 subfamily. As to quaternary structure, interacts with the L-A virus GAG protein and the whole L-A virus particles.

The protein resides in the cytoplasm. It catalyses the reaction ATP + H2O = ADP + phosphate + H(+). ATP-binding RNA helicase involved in translation initiation. Remodels RNA in response to ADP and ATP concentrations by facilitating disruption, but also formation of RNA duplexes. Has weak ATP-dependent affinity for dsRNA, but strong ATP-dependent affinity for ssRNA. Acts as a virus host factor involved in the replication of the MBV and the L-A viruses by promoting the negative-strand RNA synthesis. May be involved in recognition of the preinitiation complex and DNA binding of the RNA polymerase III and play a role in mRNA splicing. The protein is ATP-dependent RNA helicase DED1 of Saccharomyces cerevisiae (strain ATCC 204508 / S288c) (Baker's yeast).